A 459-amino-acid chain; its full sequence is Chromosomal replication initiator protein DnaA (459 aa).

A domain I, interacts with DnaA modulators region spans residues 1–83 (MKNAREIWRN…NKLEIHFIEE (83 aa)). Residues 83–121 (ESQAHKYAPADGSSNESIAVTETKEQPVLLPSKEEGDLG) form a domain II region. Positions 122 to 338 (QLNDKYIFET…GALTRVVAYA (217 aa)) are domain III, AAA+ region. Residues Gly166, Gly168, Lys169, and Thr170 each coordinate ATP. The interval 339–459 (KLVGRPIDPD…IQTLKKALSN (121 aa)) is domain IV, binds dsDNA.

Belongs to the DnaA family. Oligomerizes as a right-handed, spiral filament on DNA at oriC.

It localises to the cytoplasm. Its function is as follows. Plays an essential role in the initiation and regulation of chromosomal replication. ATP-DnaA binds to the origin of replication (oriC) to initiate formation of the DNA replication initiation complex once per cell cycle. Binds the DnaA box (a 9 base pair repeat at the origin) and separates the double-stranded (ds)DNA. Forms a right-handed helical filament on oriC DNA; dsDNA binds to the exterior of the filament while single-stranded (ss)DNA is stabiized in the filament's interior. The ATP-DnaA-oriC complex binds and stabilizes one strand of the AT-rich DNA unwinding element (DUE), permitting loading of DNA polymerase. After initiation quickly degrades to an ADP-DnaA complex that is not apt for DNA replication. Binds acidic phospholipids. The chain is Chromosomal replication initiator protein DnaA from Exiguobacterium sp. (strain ATCC BAA-1283 / AT1b).